The primary structure comprises 494 residues: Alpha-amylase-related protein (494 aa).

A signal peptide spans 1-20; sequence MFKFATAVILCLVAASSTLA. The residue at position 21 (Gln21) is a Pyrrolidone carboxylic acid. Cys48 and Cys104 are disulfide-bonded. Ca(2+) contacts are provided by Asn118, Gln169, and Asp178. Cys157 and Cys171 are joined by a disulfide. Arg206 contributes to the chloride binding site. Asp208 functions as the Nucleophile in the catalytic mechanism. His212 is a binding site for Ca(2+). Catalysis depends on Glu245, which acts as the Proton donor. Asn308 and Arg343 together coordinate chloride. Intrachain disulfides connect Cys376–Cys382, Cys418–Cys441, and Cys448–Cys460.

The protein belongs to the glycosyl hydrolase 13 family. In terms of assembly, monomer. It depends on Ca(2+) as a cofactor. The cofactor is chloride.

The protein localises to the secreted. It catalyses the reaction Endohydrolysis of (1-&gt;4)-alpha-D-glucosidic linkages in polysaccharides containing three or more (1-&gt;4)-alpha-linked D-glucose units.. The protein is Alpha-amylase-related protein (Amyrel) of Drosophila bipectinata (Fruit fly).